A 356-amino-acid polypeptide reads, in one-letter code: MRRELLLEKIETYKAIMPWYVLDYYQSKLAVPYSFTTLYEYLKEYKRFFDWLMDADLTQAPKIADIDLSTLEHLTKKDLEAFVLYLRERPSLNTYSTKEGLSQTTINRTLSALSSLYKYLTEEVENDQGEPYFYRNVMKKVSTKKKKETLASRAENIKQKLFLGDETLAFLDYVDKEYEQKLSNRAKSSFRKNKERDLAIIALLLASGVRLSEAVNLDLKDVNLNMMIIEVIRKGGKRDSVNVAGFAKGYLESYLAVRQRRYKAEKQDLAFFLTEYRGVPNRMDASSIEKMVGKYSEDFKIRVTPHKLRHTLATRLYDATKSQVLVSHQLGHSSTQVTDLYTHIVNDEQKTALDNL.

One can recognise a Core-binding (CB) domain in the interval 16–121 (IMPWYVLDYY…ALSSLYKYLT (106 aa)). Positions 169-354 (AFLDYVDKEY…VNDEQKTALD (186 aa)) constitute a Tyr recombinase domain. Residues Arg210, Lys234, His306, Arg309, and His332 contribute to the active site. Residue Tyr341 is the O-(3'-phospho-DNA)-tyrosine intermediate of the active site.

The protein belongs to the 'phage' integrase family. XerS subfamily.

The protein resides in the cytoplasm. With respect to regulation, ftsK is required for recombination. In terms of biological role, site-specific tyrosine recombinase, which acts by catalyzing the cutting and rejoining of the recombining DNA molecules. Essential to convert dimers of the bacterial chromosome into monomers to permit their segregation at cell division. The protein is Tyrosine recombinase XerS of Streptococcus pyogenes serotype M12 (strain MGAS9429).